Here is a 151-residue protein sequence, read N- to C-terminus: UPF0178 protein amb2838 (151 aa).

Belongs to the UPF0178 family.

The polypeptide is UPF0178 protein amb2838 (Paramagnetospirillum magneticum (strain ATCC 700264 / AMB-1) (Magnetospirillum magneticum)).